A 245-amino-acid chain; its full sequence is MTSTTSFTRADGRAQDQMRTVKITRGFTTNPAGSVLIEFGNTRVMCTASVELGVPRFKRDSGEGWLTAEYAMLPAATAERNRRESMAGKVKGRTHEISRLIGRSLRAAVDLSQLGENTIAIDCDVLQADGGTRTAAITGAYVALADAIRVLKEQGVVPGDPLLPPVAAVSVGLIDGQPCLDLPYEEDVRADVDMNVVMTESGEFVEIQGTGEETTFTRAQLNEMLDIAEKGCRELVHAQKAALGI.

Phosphate is bound by residues Arg-93 and 131–133; that span reads GTR.

This sequence belongs to the RNase PH family. In terms of assembly, homohexameric ring arranged as a trimer of dimers.

The catalysed reaction is tRNA(n+1) + phosphate = tRNA(n) + a ribonucleoside 5'-diphosphate. Functionally, phosphorolytic 3'-5' exoribonuclease that plays an important role in tRNA 3'-end maturation. Removes nucleotide residues following the 3'-CCA terminus of tRNAs; can also add nucleotides to the ends of RNA molecules by using nucleoside diphosphates as substrates, but this may not be physiologically important. Probably plays a role in initiation of 16S rRNA degradation (leading to ribosome degradation) during starvation. The polypeptide is Ribonuclease PH (Corynebacterium efficiens (strain DSM 44549 / YS-314 / AJ 12310 / JCM 11189 / NBRC 100395)).